The chain runs to 194 residues: Lipoprotein signal peptidase (194 aa).

Helical transmembrane passes span 75 to 95 and 97 to 117; these read TIFL…MICS and TIGS…NLID. Catalysis depends on residues aspartate 126 and aspartate 144. A helical transmembrane segment spans residues 135 to 155; that stretch reads YSFPVFNLADCFITLGVIILM.

This sequence belongs to the peptidase A8 family.

It localises to the cell inner membrane. It catalyses the reaction Release of signal peptides from bacterial membrane prolipoproteins. Hydrolyzes -Xaa-Yaa-Zaa-|-(S,diacylglyceryl)Cys-, in which Xaa is hydrophobic (preferably Leu), and Yaa (Ala or Ser) and Zaa (Gly or Ala) have small, neutral side chains.. The protein operates within protein modification; lipoprotein biosynthesis (signal peptide cleavage). This protein specifically catalyzes the removal of signal peptides from prolipoproteins. In Rickettsia prowazekii (strain Madrid E), this protein is Lipoprotein signal peptidase.